A 94-amino-acid polypeptide reads, in one-letter code: MMIESVAISVKESMPPQVSVEINGMLNDGCTAFHEAKQSIDGNTIKIEVTTIRPKDAMCNQQISPFSTIIQIEGELKPGEYTILVNDVAEALKL.

Its function is as follows. Could be a silencing control element for the regulation of the restriction system. This is an uncharacterized protein from Herpetosiphon aurantiacus (Herpetosiphon giganteus).